A 272-amino-acid chain; its full sequence is Ribosomal RNA small subunit methyltransferase A (272 aa).

6 residues coordinate S-adenosyl-L-methionine: histidine 11, leucine 13, glycine 38, glutamate 59, aspartate 84, and asparagine 109.

Belongs to the class I-like SAM-binding methyltransferase superfamily. rRNA adenine N(6)-methyltransferase family. RsmA subfamily.

Its subcellular location is the cytoplasm. The enzyme catalyses adenosine(1518)/adenosine(1519) in 16S rRNA + 4 S-adenosyl-L-methionine = N(6)-dimethyladenosine(1518)/N(6)-dimethyladenosine(1519) in 16S rRNA + 4 S-adenosyl-L-homocysteine + 4 H(+). Functionally, specifically dimethylates two adjacent adenosines (A1518 and A1519) in the loop of a conserved hairpin near the 3'-end of 16S rRNA in the 30S particle. May play a critical role in biogenesis of 30S subunits. This Rippkaea orientalis (strain PCC 8801 / RF-1) (Cyanothece sp. (strain PCC 8801)) protein is Ribosomal RNA small subunit methyltransferase A.